The sequence spans 103 residues: Phosphoribosyl-ATP pyrophosphatase (103 aa).

The protein belongs to the PRA-PH family.

It is found in the cytoplasm. It catalyses the reaction 1-(5-phospho-beta-D-ribosyl)-ATP + H2O = 1-(5-phospho-beta-D-ribosyl)-5'-AMP + diphosphate + H(+). It functions in the pathway amino-acid biosynthesis; L-histidine biosynthesis; L-histidine from 5-phospho-alpha-D-ribose 1-diphosphate: step 2/9. This chain is Phosphoribosyl-ATP pyrophosphatase, found in Cereibacter sphaeroides (strain ATCC 17025 / ATH 2.4.3) (Rhodobacter sphaeroides).